Reading from the N-terminus, the 177-residue chain is MPTPKKGPRLASSPAHERLMLANMATSLFQNGRITTTLPKAKRLRPLAERLITFAKRGDLHSRRRVMRVIRNKSVVHILFTQIAEQMEQREGGYTRIVKIAPRVGDAAPAAVIELVTEPVAKKAVVKEAEAAAKVAEEEAPAVEAEATEAVEAPVEETAAAEAEAPAEEAADAEKAE.

Positions 136 to 177 (AEEEAPAVEAEATEAVEAPVEETAAAEAEAPAEEAADAEKAE) are disordered. The span at 138–149 (EEAPAVEAEATE) shows a compositional bias: acidic residues. Over residues 150 to 164 (AVEAPVEETAAAEAE) the composition is skewed to low complexity.

This sequence belongs to the bacterial ribosomal protein bL17 family. Part of the 50S ribosomal subunit. Contacts protein L32.

The polypeptide is Large ribosomal subunit protein bL17 (Bifidobacterium longum (strain NCC 2705)).